The chain runs to 350 residues: MPNTHKITPQEALLRTIEHREIFHDEMLHIMRGIMTGEWSPVMMAALITGLRVKKETIGEITAAAQVMREFSTKVNVADTSHLVDIVGTGGDGSHTFNISTCAMFVAAAAGARVSKHGGRSVSSKSGSADVMESLGVNINLSPEAIAQCIEQVGVGFMFAPNHHPAMKNVAPVRKELGIKTIFNLLGPLTNPAGAPNILMGVFHPDLVGIQVRALQRLGAEHAVVVYGKDGMDEVSLGATTLVGELKHGEITEYEIHPEDFGMVMASNRALKVETPEQSKTMLQGVLDNAAGAPKDIVILNAGVALYAANVVPTMSAGIDKARVAIESGAARAKLAQLVSMSQQLKGAAK.

Residues Gly88, 91-92 (GD), Thr96, 98-101 (NIST), 116-124 (KHGGRSVSS), and Ser128 each bind 5-phospho-alpha-D-ribose 1-diphosphate. Gly88 lines the anthranilate pocket. Ser100 provides a ligand contact to Mg(2+). Residue Arg174 participates in anthranilate binding. Residues Asp233 and Glu234 each contribute to the Mg(2+) site.

This sequence belongs to the anthranilate phosphoribosyltransferase family. In terms of assembly, homodimer. Requires Mg(2+) as cofactor.

It carries out the reaction N-(5-phospho-beta-D-ribosyl)anthranilate + diphosphate = 5-phospho-alpha-D-ribose 1-diphosphate + anthranilate. The protein operates within amino-acid biosynthesis; L-tryptophan biosynthesis; L-tryptophan from chorismate: step 2/5. Its function is as follows. Catalyzes the transfer of the phosphoribosyl group of 5-phosphorylribose-1-pyrophosphate (PRPP) to anthranilate to yield N-(5'-phosphoribosyl)-anthranilate (PRA). This Albidiferax ferrireducens (strain ATCC BAA-621 / DSM 15236 / T118) (Rhodoferax ferrireducens) protein is Anthranilate phosphoribosyltransferase.